The primary structure comprises 190 residues: uncharacterized protein (190 aa).

The first 28 residues, 1-28 (MEFSLQYITIFIFVILFLIGLFSSKSRS), serve as a signal peptide directing secretion.

This is an uncharacterized protein from Haemophilus influenzae (strain ATCC 51907 / DSM 11121 / KW20 / Rd).